Consider the following 339-residue polypeptide: Protein FAM50A (339 aa).

The tract at residues 1 to 31 is disordered; that stretch reads MAQYKGAASEAGRAMHLMKKREKQREQMEQM. Ala-2 carries the post-translational modification N-acetylalanine. Lys-100 participates in a covalent cross-link: Glycyl lysine isopeptide (Lys-Gly) (interchain with G-Cter in SUMO2). The disordered stretch occupies residues 121–177; that stretch reads SFTLEEEEEGGEEEEEAAMYEEEMEREEITTKKRKLGKNPDVDTSFLPDRDREEEEN. Over residues 124-146 the composition is skewed to acidic residues; that stretch reads LEEEEEGGEEEEEAAMYEEEMER. A Nuclear localization signal motif is present at residues 152-155; it reads KKRK. Over residues 168–177 the composition is skewed to basic and acidic residues; the sequence is PDRDREEEEN.

This sequence belongs to the FAM50 family. As to quaternary structure, interacts with EFTUD2, a component of the spliceosome U5 complex. Interacts with DDX41, a component of the spliceosome C complex. Widely expressed in fetal and adult tissues. Mostly abundant in fetal brain, liver and kidney; in the adult, high levels were also observed in heart, skeletal muscle, spleen, thymus, prostate and small intestine. Expressed in fetal cerebellum and hypothalamus. Low expression is observed in fetal temporal lobe.

The protein resides in the nucleus. Its function is as follows. Probably involved in the regulation of pre-mRNA splicing. This chain is Protein FAM50A (FAM50A), found in Homo sapiens (Human).